A 164-amino-acid polypeptide reads, in one-letter code: Cyclic pyranopterin monophosphate synthase (164 aa).

Residues 75–77 (MAH) and 112–113 (ME) contribute to the substrate site. Asp127 is an active-site residue.

Belongs to the MoaC family. In terms of assembly, homohexamer; trimer of dimers.

It catalyses the reaction (8S)-3',8-cyclo-7,8-dihydroguanosine 5'-triphosphate = cyclic pyranopterin phosphate + diphosphate. Its pathway is cofactor biosynthesis; molybdopterin biosynthesis. Catalyzes the conversion of (8S)-3',8-cyclo-7,8-dihydroguanosine 5'-triphosphate to cyclic pyranopterin monophosphate (cPMP). The sequence is that of Cyclic pyranopterin monophosphate synthase from Desulforamulus reducens (strain ATCC BAA-1160 / DSM 100696 / MI-1) (Desulfotomaculum reducens).